The following is a 583-amino-acid chain: ATP-dependent lipid A-core flippase (583 aa).

Transmembrane regions (helical) follow at residues 32–52 (VAFL…TGFL), 71–91 (LHLL…AGFI), 115–135 (LMSL…TSKL), 160–180 (ILGM…IFAV), 259–279 (SMVV…YAVG), and 286–306 (FAAF…LTSL). In terms of domain architecture, ABC transmembrane type-1 spans 34–312 (FLISIIALVT…LTSLNEELQV (279 aa)). The ABC transporter domain maps to 344-580 (IVFENVTLQY…DGHYAKLYRK (237 aa)). 378–385 (GRSGGGKT) serves as a coordination point for ATP.

This sequence belongs to the ABC transporter superfamily. Lipid exporter (TC 3.A.1.106) family. Homodimer.

The protein resides in the cell inner membrane. It carries out the reaction ATP + H2O + lipid A-core oligosaccharideSide 1 = ADP + phosphate + lipid A-core oligosaccharideSide 2.. In terms of biological role, involved in lipopolysaccharide (LPS) biosynthesis. Translocates lipid A-core from the inner to the outer leaflet of the inner membrane. Transmembrane domains (TMD) form a pore in the inner membrane and the ATP-binding domain (NBD) is responsible for energy generation. The chain is ATP-dependent lipid A-core flippase from Methylobacillus flagellatus (strain ATCC 51484 / DSM 6875 / VKM B-1610 / KT).